Consider the following 500-residue polypeptide: NAD(P)H-quinone oxidoreductase chain 4, chloroplastic (500 aa).

The next 15 membrane-spanning stretches (helical) occupy residues 4-24, 31-51, 87-107, 111-131, 134-154, 167-187, 207-227, 242-262, 274-294, 305-325, 330-350, 358-378, 386-406, 416-436, and 462-482; these read LPWL…IPLF, IIRW…TYTF, IGPI…AWPV, PRLF…LFAS, ILLF…LISM, FILY…SMGL, VVLE…KLPI, HYST…YGLI, SLFS…AALT, IAYS…SMAD, GAIL…FLAG, TLFL…STMF, LALP…GIIT, IVIA…LLSM, and IFIS…PDLV.

This sequence belongs to the complex I subunit 4 family.

The protein localises to the plastid. The protein resides in the chloroplast thylakoid membrane. The enzyme catalyses a plastoquinone + NADH + (n+1) H(+)(in) = a plastoquinol + NAD(+) + n H(+)(out). It catalyses the reaction a plastoquinone + NADPH + (n+1) H(+)(in) = a plastoquinol + NADP(+) + n H(+)(out). In Cycas taitungensis (Prince sago), this protein is NAD(P)H-quinone oxidoreductase chain 4, chloroplastic.